The chain runs to 910 residues: Importin subunit beta-2 (910 aa).

19 HEAT repeats span residues 12-39 (VLVELSEVIKNSLSENSQTRNAALNLLE), 44-82 (IPDLNNYLTCILINATELSVSIRSAAGLLLKNNVRVSSL), 93-126 (YTKSTVIRGLCDPEQLIRGISGNVITTIISRWGI), 132-169 (VLPQLMEMLSSPASTTQEGAFSALTKICEDSAQELDRD), 177-207 (DFMIPRFIELARHENPKIRTDALFCLNQFVL), 220-247 (FLETCYALATDVSPNVRKNVCQALVYLL), 259-286 (GSIVEYMLYSTQDSDQNVALEACEFWLA), 302-406 (DKIV…LSSF), 414-442 (IILPHLKQSLTSEDWKVQEAGVLAVGAIA), 454-481 (PELYPYFLSLLDSKKPLVRTITCWTLGR), 499-532 (FVPLLQGLLRMVVDNNKKVQEAGCSAFAILEEQA), 540-573 (LEPILTNLAFAFQKYQRKNVLILYDAVQTLADYV), 581-619 (RYIELLITPLLQKWSMIPDDDPNLFPLFECLSSVAVALR), 627-677 (AETY…ALGS), 690-721 (LGQIIGICAKDEVPEVRQSAYALLGDMCMYCF), 729-764 (DALLVDMLPQMQLPLLHVSASNNAIWSAGEMALQLG), 772-807 (KPLLERLICILKSKKSNTTVLENVAITIGRLGVYNP), 815-848 (ELFYQPWFEIIKTVGENEEKDSAFRGFCNILACN), and 857-888 (PMFVLCVAEYENPSAELRDMFQKILQGSVELF). Residues 34 to 122 (ALNLLEKAKD…SGNVITTIIS (89 aa)) enclose the Importin N-terminal domain. Residues 333 to 381 (DREEDIRPQHAKGKSRITLNTQGPITQQGSSNADADELEDEDEDDDEFD) are disordered. Residues 349 to 364 (ITLNTQGPITQQGSSN) are compositionally biased toward polar residues. Positions 366 to 381 (DADELEDEDEDDDEFD) are enriched in acidic residues.

Belongs to the importin beta family. Importin beta-2 subfamily. Interacts with Ran; interacts specifically with the GTP-bound form of Ran (GTP-Ran), protecting it from GTP hydrolysis and nucleotide exchange. Interacts with nucleoporins.

The protein localises to the cytoplasm. It is found in the nucleus envelope. Functionally, functions in nuclear protein import as nuclear transport receptor. Serves as receptor for arginine/glycine-rich nuclear localization signals (rg-NLS) and PY-NLS in cargo substrates. Its predominant cargo substrate seems to be mRNA-binding proteins. Mediates docking of the importin/substrate complex to the nuclear pore complex (NPC) through binding to repeat-containing nucleoporins. The complex is subsequently translocated through the pore by an energy requiring, Ran-dependent mechanism. At the nucleoplasmic side of the NPC, GTP-Ran binding leads to release of the cargo. The importin is re-exported from the nucleus to the cytoplasm where GTP hydrolysis releases Ran from importin. The directionality of nuclear import is thought to be conferred by an asymmetric distribution of the GTP- and GDP-bound forms of Ran between the cytoplasm and nucleus. This is Importin subunit beta-2 from Schizosaccharomyces pombe (strain 972 / ATCC 24843) (Fission yeast).